Consider the following 1189-residue polypeptide: Nucleolar protein NET1 (1189 aa).

A phosphoserine mark is found at Ser60 and Ser166. Disordered regions lie at residues 160–260 (SKLN…ISSG) and 345–1189 (TAQD…FKKK). The span at 166 to 180 (SPQSVQPQQQIPSSS) shows a compositional bias: low complexity. A compositionally biased stretch (polar residues) spans 200–210 (IRSATNGSMRV). Phosphoserine occurs at positions 231 and 252. Pro residues predominate over residues 244–253 (LPPPTQPQSP). The segment covering 368–381 (PEPRISEIEKELKE) has biased composition (basic and acidic residues). The segment covering 391–407 (PAKAAKIPMKKPYLENG) has biased composition (low complexity). The segment covering 432–450 (ASLQRSQSSIADNNGSPVK) has biased composition (polar residues). Phosphoserine occurs at positions 437, 439, 447, and 452. Polar residues predominate over residues 470-486 (ASNTSITKSSNGESWGK). Position 497 is a phosphoserine (Ser497). Residues 526 to 543 (NQVREKEDTNDKLLEKEI) show a composition bias toward basic and acidic residues. Acidic residues predominate over residues 590–601 (IEDDGNDNDEVD). The segment covering 641–657 (SRTSGNSKNSKPYTTVL) has biased composition (polar residues). Over residues 659-668 (KDIDNSKPDP) the composition is skewed to basic and acidic residues. Phosphothreonine is present on Thr676. Over residues 682-691 (KRAAQLLAGA) the composition is skewed to low complexity. Residues 692-702 (KKNEVPQKSTE) are compositionally biased toward basic and acidic residues. Acidic residues predominate over residues 710-725 (TDDESESGIETDFSSD). Over residues 756 to 777 (KDSKIINKEVDEERNDKRDSQK) the composition is skewed to basic and acidic residues. Over residues 778–792 (KSAVSESSVTNSKIS) the composition is skewed to polar residues. Residues 806 to 815 (KQNEATKVET) are compositionally biased toward basic and acidic residues. Low complexity predominate over residues 822–833 (SSFPVVGGSPSV). Ser830 bears the Phosphoserine mark. 3 stretches are compositionally biased toward basic and acidic residues: residues 884–897 (DLNK…EPEK), 905–919 (ANDK…DSKS), and 945–954 (ANDKLKDLKA). A compositionally biased stretch (low complexity) spans 969–999 (SNEKNNSSANDDDSSSSGSSTEDESSSSSSS). Over residues 1023–1039 (RSSSKIEAPSPSVNKKI) the composition is skewed to polar residues. Residue Thr1042 is modified to Phosphothreonine. Low complexity predominate over residues 1055–1070 (SSPPSVKSKTTSNPSS). Residues Ser1056 and Ser1059 each carry the phosphoserine modification. Residues 1095–1109 (PDVKEKTSKSNEKSQ) are compositionally biased toward basic and acidic residues. 2 stretches are compositionally biased toward low complexity: residues 1123-1137 (DSDS…SDSS) and 1158-1169 (SFISAKSASAAL).

It to yeast YKR010c. Component of the RENT complex which is composed of at least NET1, CDC14 and SIR2. Interacts with NSI1. Post-translationally, phosphorylated by CDC5.

Its subcellular location is the nucleus. It is found in the nucleolus. In terms of biological role, has a role in chromosome maintenance and is involved in mitotic exit. Inhibits the action of CDC14 by sequestering it in the nucleolus. Also binds to RNA polymerase I and stimulates rRNA synthesis. Influences RDNA chromatin by tethering SIR2 to rDNA in the nucleolus. The protein is Nucleolar protein NET1 (NET1) of Saccharomyces cerevisiae (strain ATCC 204508 / S288c) (Baker's yeast).